The following is a 265-amino-acid chain: Transcription factor LBX1b (265 aa).

Positions 121–180 form a DNA-binding region, homeobox; that stretch reads RRKSRTAFTNHQLYELEKRFLHQKYLSPADRDQIAHQLGLTNAQVITWFQNRRAKLKRDL.

The protein resides in the nucleus. In terms of biological role, transcription factor required for the development of hypaxial muscles. The protein is Transcription factor LBX1b of Danio rerio (Zebrafish).